The following is a 410-amino-acid chain: Scarecrow-like protein 32 (410 aa).

The 391-residue stretch at 18 to 408 (LRGCGDANFM…HSVVFATVWV (391 aa)) folds into the GRAS domain. A leucine repeat I (LRI) region spans residues 25 to 88 (NFMEQLLLHC…AVSKTPTLSS (64 aa)). The tract at residues 107–188 (LAAFVDLTPW…HFPPFINISY (82 aa)) is VHIID. Positions 138–142 (VHIVD) match the VHIID motif. The interval 190 to 227 (ELGSKLVNFATTRNITMEFTIVPSTYSDGFSSLLQQLR) is leucine repeat II (LRII). Residues 237–329 (LVVNCHMMLR…EAEISWKIEN (93 aa)) form a PFYRE region. Positions 332–408 (AKEGAERVER…HSVVFATVWV (77 aa)) are SAW.

The protein belongs to the GRAS family. In terms of tissue distribution, expressed in seedlings, leaves and flowers.

It is found in the nucleus. Its function is as follows. Probable transcription factor involved in plant development. The polypeptide is Scarecrow-like protein 32 (SCL32) (Arabidopsis thaliana (Mouse-ear cress)).